Here is a 213-residue protein sequence, read N- to C-terminus: Putative thymidylate kinase 251L (213 aa).

ATP is bound at residue 21-28 (GCDKTGKS).

Belongs to the thymidylate kinase family.

It carries out the reaction dTMP + ATP = dTDP + ADP. It participates in pyrimidine metabolism; dTTP biosynthesis. Functionally, catalyzes the conversion of dTMP to dTDP. This is Putative thymidylate kinase 251L from Acheta domesticus (House cricket).